The chain runs to 591 residues: Alpha-(1-&gt;6)-mannopyranosyltransferase Rv1459c (591 aa).

13 helical membrane-spanning segments follow: residues 40-60, 80-100, 117-137, 201-221, 235-255, 259-279, 321-341, 367-387, 408-428, 441-461, 473-493, 502-522, and 527-547; these read FGAT…ARPV, VSLT…LMLG, TLLL…KDVY, IVAA…LIVW, VSAL…VAGI, ALML…LDMA, EWGP…SSQV, LLLA…ILGW, WMSP…LLGL, AIGV…VLRG, LAVT…WAII, PGFR…GPTA, and FALF…ILLI. The segment at 569–591 is disordered; that stretch reads ESASKTPATRRPTAAPDAYADST. Residues 574-584 are compositionally biased toward low complexity; that stretch reads TPATRRPTAAP.

The protein belongs to the MptA/B family.

The protein resides in the membrane. In terms of biological role, catalyzes the addition of alpha-(1-&gt;6)-mannose residue. The protein is Alpha-(1-&gt;6)-mannopyranosyltransferase Rv1459c of Mycobacterium tuberculosis (strain ATCC 25618 / H37Rv).